We begin with the raw amino-acid sequence, 239 residues long: tRNA (guanine-N(7)-)-methyltransferase (239 aa).

Residues glutamate 69, glutamate 94, aspartate 121, and aspartate 144 each contribute to the S-adenosyl-L-methionine site. The active site involves aspartate 144. Residue lysine 148 coordinates substrate. Residues 150 to 155 (RHNKRR) are interaction with RNA. Substrate contacts are provided by residues aspartate 180 and 217–220 (TKFE).

It belongs to the class I-like SAM-binding methyltransferase superfamily. TrmB family. In terms of assembly, monomer.

It carries out the reaction guanosine(46) in tRNA + S-adenosyl-L-methionine = N(7)-methylguanosine(46) in tRNA + S-adenosyl-L-homocysteine. Its pathway is tRNA modification; N(7)-methylguanine-tRNA biosynthesis. Functionally, catalyzes the formation of N(7)-methylguanine at position 46 (m7G46) in tRNA. The chain is tRNA (guanine-N(7)-)-methyltransferase from Cronobacter sakazakii (strain ATCC BAA-894) (Enterobacter sakazakii).